Consider the following 272-residue polypeptide: S-adenosylmethionine decarboxylase proenzyme (272 aa).

Residue Ser122 is the Schiff-base intermediate with substrate; via pyruvic acid of the active site. Position 122 is a pyruvic acid (Ser); by autocatalysis (Ser122). Residue His127 is the Proton acceptor; for processing activity of the active site. Cys150 functions as the Proton donor; for catalytic activity in the catalytic mechanism.

Belongs to the prokaryotic AdoMetDC family. Type 2 subfamily. In terms of assembly, heterooctamer of four alpha and four beta chains arranged as a tetramer of alpha/beta heterodimers. The cofactor is pyruvate. Is synthesized initially as an inactive proenzyme. Formation of the active enzyme involves a self-maturation process in which the active site pyruvoyl group is generated from an internal serine residue via an autocatalytic post-translational modification. Two non-identical subunits are generated from the proenzyme in this reaction, and the pyruvate is formed at the N-terminus of the alpha chain, which is derived from the carboxyl end of the proenzyme. The post-translation cleavage follows an unusual pathway, termed non-hydrolytic serinolysis, in which the side chain hydroxyl group of the serine supplies its oxygen atom to form the C-terminus of the beta chain, while the remainder of the serine residue undergoes an oxidative deamination to produce ammonia and the pyruvoyl group blocking the N-terminus of the alpha chain.

The enzyme catalyses S-adenosyl-L-methionine + H(+) = S-adenosyl 3-(methylsulfanyl)propylamine + CO2. Its pathway is amine and polyamine biosynthesis; S-adenosylmethioninamine biosynthesis; S-adenosylmethioninamine from S-adenosyl-L-methionine: step 1/1. Functionally, catalyzes the decarboxylation of S-adenosylmethionine to S-adenosylmethioninamine (dcAdoMet), the propylamine donor required for the synthesis of the polyamines spermine and spermidine from the diamine putrescine. This is S-adenosylmethionine decarboxylase proenzyme from Clostridium botulinum (strain Alaska E43 / Type E3).